The following is a 344-amino-acid chain: Peroxidase 36 (344 aa).

An N-terminal signal peptide occupies residues 1-28 (MNTKTVKSMAGIVLSQISLVALFPLCIC). 4 disulfides stabilise this stretch: Cys-50/Cys-130, Cys-83/Cys-88, Cys-136/Cys-337, and Cys-215/Cys-247. His-81 functions as the Proton acceptor in the catalytic mechanism. 5 residues coordinate Ca(2+): Asp-82, Val-85, Gly-87, Asp-89, and Ser-91. Position 178 (Pro-178) interacts with substrate. Residue His-208 coordinates heme b. Ca(2+) is bound at residue Thr-209. Residue Asn-224 is glycosylated (N-linked (GlcNAc...) asparagine). Residues Asp-260, Thr-263, and Asp-268 each contribute to the Ca(2+) site.

Belongs to the peroxidase family. Classical plant (class III) peroxidase subfamily. Heme b is required as a cofactor. Ca(2+) serves as cofactor.

Its subcellular location is the secreted. It catalyses the reaction 2 a phenolic donor + H2O2 = 2 a phenolic radical donor + 2 H2O. Functionally, removal of H(2)O(2), oxidation of toxic reductants, biosynthesis and degradation of lignin, suberization, auxin catabolism, response to environmental stresses such as wounding, pathogen attack and oxidative stress. These functions might be dependent on each isozyme/isoform in each plant tissue. This Arabidopsis thaliana (Mouse-ear cress) protein is Peroxidase 36 (PER36).